The sequence spans 123 residues: UPF0102 protein PFL_5073 (123 aa).

The protein belongs to the UPF0102 family.

This chain is UPF0102 protein PFL_5073, found in Pseudomonas fluorescens (strain ATCC BAA-477 / NRRL B-23932 / Pf-5).